The sequence spans 349 residues: Hyaluronidase Tab y 2.0101 (349 aa).

A signal peptide spans 1 to 25 (MKLHQGLVCLSVLILLPTCILGDRK). 2 disulfides stabilise this stretch: Cys37–Cys328 and Cys205–Cys216. N-linked (GlcNAc...) asparagine glycans are attached at residues Asn41, Asn81, Asn99, and Asn119. Glu129 acts as the Proton donor in catalysis. Asn147 is a glycosylation site (N-linked (GlcNAc...) asparagine). Residues Asn251 and Asn297 are each glycosylated (N-linked (GlcNAc...) asparagine).

Belongs to the glycosyl hydrolase 56 family. As to expression, expressed in salivary glands.

The protein resides in the secreted. The enzyme catalyses Random hydrolysis of (1-&gt;4)-linkages between N-acetyl-beta-D-glucosamine and D-glucuronate residues in hyaluronate.. Hydrolyzes high molecular weight hyaluronic acid to produce small oligosaccharides. The sequence is that of Hyaluronidase Tab y 2.0101 from Tabanus yao (Horsefly).